We begin with the raw amino-acid sequence, 338 residues long: 1-aminocyclopropane-1-carboxylate deaminase (338 aa).

K51 carries the N6-(pyridoxal phosphate)lysine modification. Residue S78 is the Nucleophile of the active site.

The protein belongs to the ACC deaminase/D-cysteine desulfhydrase family. In terms of assembly, homotrimer. The cofactor is pyridoxal 5'-phosphate.

It carries out the reaction 1-aminocyclopropane-1-carboxylate + H2O = 2-oxobutanoate + NH4(+). Its function is as follows. Catalyzes a cyclopropane ring-opening reaction, the irreversible conversion of 1-aminocyclopropane-1-carboxylate (ACC) to ammonia and alpha-ketobutyrate. Allows growth on ACC as a nitrogen source. This is 1-aminocyclopropane-1-carboxylate deaminase from Paracidovorax citrulli (strain AAC00-1) (Acidovorax citrulli).